The chain runs to 320 residues: Sucrose operon repressor (320 aa).

Positions 1–57 (MVAKLTDVAKLAGVSPTTVSRVINRKGYLSEKTITKVQAAMKTLGYKPNNLARSLQG) constitute an HTH lacI-type domain. The H-T-H motif DNA-binding region spans 5–24 (LTDVAKLAGVSPTTVSRVIN).

Negative regulator of scrB expression. The protein is Sucrose operon repressor (scrR) of Streptococcus mutans serotype c (strain ATCC 700610 / UA159).